Consider the following 232-residue polypeptide: Recombination protein RecR (232 aa).

The C4-type zinc finger occupies 92 to 107 (CQVCFHLSAEPVCDIC). The region spanning 115 to 209 (SVICVVSDPR…KVTRIAFGLP (95 aa)) is the Toprim domain.

The protein belongs to the RecR family.

Functionally, may play a role in DNA repair. It seems to be involved in an RecBC-independent recombinational process of DNA repair. It may act with RecF and RecO. The polypeptide is Recombination protein RecR (Synechocystis sp. (strain ATCC 27184 / PCC 6803 / Kazusa)).